The following is a 384-amino-acid chain: uncharacterized protein (384 aa).

Over residues 327 to 339 the composition is skewed to basic residues; the sequence is KKEKKEKKEKKPK. Residues 327–358 form a disordered region; sequence KKEKKEKKEKKPKKAVEEEPKQYLTPEFVNDD.

This is an uncharacterized protein from Magallana gigas (Pacific oyster).